Consider the following 1070-residue polypeptide: DNA-directed RNA polymerase subunit beta (1070 aa).

This sequence belongs to the RNA polymerase beta chain family. In plastids the minimal PEP RNA polymerase catalytic core is composed of four subunits: alpha, beta, beta', and beta''. When a (nuclear-encoded) sigma factor is associated with the core the holoenzyme is formed, which can initiate transcription.

It localises to the plastid. The protein localises to the chloroplast. It catalyses the reaction RNA(n) + a ribonucleoside 5'-triphosphate = RNA(n+1) + diphosphate. In terms of biological role, DNA-dependent RNA polymerase catalyzes the transcription of DNA into RNA using the four ribonucleoside triphosphates as substrates. The chain is DNA-directed RNA polymerase subunit beta from Angiopteris evecta (Mule's foot fern).